The primary structure comprises 469 residues: 3-isopropylmalate dehydratase large subunit (469 aa).

C350, C410, and C413 together coordinate [4Fe-4S] cluster.

This sequence belongs to the aconitase/IPM isomerase family. LeuC type 1 subfamily. As to quaternary structure, heterodimer of LeuC and LeuD. Requires [4Fe-4S] cluster as cofactor.

The enzyme catalyses (2R,3S)-3-isopropylmalate = (2S)-2-isopropylmalate. Its pathway is amino-acid biosynthesis; L-leucine biosynthesis; L-leucine from 3-methyl-2-oxobutanoate: step 2/4. Catalyzes the isomerization between 2-isopropylmalate and 3-isopropylmalate, via the formation of 2-isopropylmaleate. The protein is 3-isopropylmalate dehydratase large subunit of Mesorhizobium japonicum (strain LMG 29417 / CECT 9101 / MAFF 303099) (Mesorhizobium loti (strain MAFF 303099)).